Reading from the N-terminus, the 240-residue chain is tRNA (guanine-N(1)-)-methyltransferase (240 aa).

S-adenosyl-L-methionine-binding positions include Gly-110 and 129–134; that span reads LGDFVL.

This sequence belongs to the RNA methyltransferase TrmD family. In terms of assembly, homodimer.

It is found in the cytoplasm. The enzyme catalyses guanosine(37) in tRNA + S-adenosyl-L-methionine = N(1)-methylguanosine(37) in tRNA + S-adenosyl-L-homocysteine + H(+). Functionally, specifically methylates guanosine-37 in various tRNAs. The chain is tRNA (guanine-N(1)-)-methyltransferase from Clostridium botulinum (strain Langeland / NCTC 10281 / Type F).